Consider the following 482-residue polypeptide: Aspartyl/glutamyl-tRNA(Asn/Gln) amidotransferase subunit B (482 aa).

It belongs to the GatB/GatE family. GatB subfamily. Heterotrimer of A, B and C subunits.

It carries out the reaction L-glutamyl-tRNA(Gln) + L-glutamine + ATP + H2O = L-glutaminyl-tRNA(Gln) + L-glutamate + ADP + phosphate + H(+). It catalyses the reaction L-aspartyl-tRNA(Asn) + L-glutamine + ATP + H2O = L-asparaginyl-tRNA(Asn) + L-glutamate + ADP + phosphate + 2 H(+). Functionally, allows the formation of correctly charged Asn-tRNA(Asn) or Gln-tRNA(Gln) through the transamidation of misacylated Asp-tRNA(Asn) or Glu-tRNA(Gln) in organisms which lack either or both of asparaginyl-tRNA or glutaminyl-tRNA synthetases. The reaction takes place in the presence of glutamine and ATP through an activated phospho-Asp-tRNA(Asn) or phospho-Glu-tRNA(Gln). The polypeptide is Aspartyl/glutamyl-tRNA(Asn/Gln) amidotransferase subunit B (Thermotoga neapolitana (strain ATCC 49049 / DSM 4359 / NBRC 107923 / NS-E)).